We begin with the raw amino-acid sequence, 196 residues long: Orotate phosphoribosyltransferase (196 aa).

5-phospho-alpha-D-ribose 1-diphosphate-binding positions include arginine 102, lysine 103, lysine 106, histidine 108, and glutamate 129–serine 137. Threonine 133 and arginine 161 together coordinate orotate.

Belongs to the purine/pyrimidine phosphoribosyltransferase family. PyrE subfamily. Homodimer. Mg(2+) is required as a cofactor.

The enzyme catalyses orotidine 5'-phosphate + diphosphate = orotate + 5-phospho-alpha-D-ribose 1-diphosphate. It participates in pyrimidine metabolism; UMP biosynthesis via de novo pathway; UMP from orotate: step 1/2. Its function is as follows. Catalyzes the transfer of a ribosyl phosphate group from 5-phosphoribose 1-diphosphate to orotate, leading to the formation of orotidine monophosphate (OMP). This Prochlorococcus marinus (strain MIT 9303) protein is Orotate phosphoribosyltransferase.